The following is a 248-amino-acid chain: Coenzyme F420:L-glutamate ligase (248 aa).

GTP-binding positions include 15–18 (IPLI), 45–46 (ET), and Lys50. A divalent metal cation is bound at residue Asp115. Asn118 is a GTP binding site. A divalent metal cation contacts are provided by Asp155, Ser156, and Gln213. 211-218 (MGQSDEGI) is a binding site for GTP.

This sequence belongs to the CofE family. Homodimer. Requires Mg(2+) as cofactor. It depends on Mn(2+) as a cofactor. K(+) is required as a cofactor.

The enzyme catalyses oxidized coenzyme F420-0 + GTP + L-glutamate = oxidized coenzyme F420-1 + GDP + phosphate + H(+). It carries out the reaction oxidized coenzyme F420-1 + GTP + L-glutamate = oxidized coenzyme F420-2 + GDP + phosphate + H(+). Its pathway is cofactor biosynthesis; coenzyme F420 biosynthesis. Functionally, catalyzes the GTP-dependent successive addition of two or more gamma-linked L-glutamates to the L-lactyl phosphodiester of 7,8-didemethyl-8-hydroxy-5-deazariboflavin (F420-0) to form coenzyme F420-0-glutamyl-glutamate (F420-2) or polyglutamated F420 derivatives. In Methanococcus maripaludis (strain C6 / ATCC BAA-1332), this protein is Coenzyme F420:L-glutamate ligase.